Reading from the N-terminus, the 314-residue chain is Flotillin-like protein FloA (314 aa).

Residues 4-24 (IGPIIIAVLIIIFLIVFFTLV) form a helical membrane-spanning segment.

This sequence belongs to the flotillin-like FloA family. Homooligomerizes.

The protein resides in the cell membrane. Its subcellular location is the membrane raft. Found in functional membrane microdomains (FMM) that may be equivalent to eukaryotic membrane rafts. FMMs are highly dynamic and increase in number as cells age. Flotillins are thought to be important factors in membrane fluidity. The sequence is that of Flotillin-like protein FloA from Listeria innocua serovar 6a (strain ATCC BAA-680 / CLIP 11262).